Reading from the N-terminus, the 817-residue chain is Lon protease 1 (817 aa).

Positions 18 to 216 constitute a Lon N-terminal domain; sequence VPLLPLRDII…KLYELMQGEI (199 aa). 368 to 375 lines the ATP pocket; that stretch reads GPPGVGKT. Residues 604–785 form the Lon proteolytic domain; it reads EDQVGIVTGL…DDVLREALVL (182 aa). Active-site residues include serine 691 and lysine 734. Residues 789-817 are disordered; that stretch reads EEFGRKPTTDGGKLGGTTELPASPAVAPA.

The protein belongs to the peptidase S16 family. In terms of assembly, homohexamer. Organized in a ring with a central cavity.

Its subcellular location is the cytoplasm. It catalyses the reaction Hydrolysis of proteins in presence of ATP.. Functionally, ATP-dependent serine protease that mediates the selective degradation of mutant and abnormal proteins as well as certain short-lived regulatory proteins. Required for cellular homeostasis and for survival from DNA damage and developmental changes induced by stress. Degrades polypeptides processively to yield small peptide fragments that are 5 to 10 amino acids long. Binds to DNA in a double-stranded, site-specific manner. The chain is Lon protease 1 from Myxococcus xanthus.